The primary structure comprises 219 residues: Translation initiation factor IF-3 (219 aa).

It belongs to the IF-3 family. In terms of assembly, monomer.

Its subcellular location is the cytoplasm. Functionally, IF-3 binds to the 30S ribosomal subunit and shifts the equilibrium between 70S ribosomes and their 50S and 30S subunits in favor of the free subunits, thus enhancing the availability of 30S subunits on which protein synthesis initiation begins. In Prochlorococcus marinus (strain MIT 9303), this protein is Translation initiation factor IF-3.